Here is a 115-residue protein sequence, read N- to C-terminus: DNA repair protein homolog YozK (115 aa).

Residues 12–115 enclose the UmuC domain; that stretch reads ILCVDMKSFY…EKCVHTYSID (104 aa). Asp16 and Asp115 together coordinate Mg(2+).

This sequence belongs to the DNA polymerase type-Y family. It depends on Mg(2+) as a cofactor.

This Bacillus subtilis (strain 168) protein is DNA repair protein homolog YozK (yozK).